The following is a 293-amino-acid chain: Epimerase family protein SDR39U1 (293 aa).

Residues 31-32 (SR), 58-59 (LA), Glu77, Arg82, and Val160 each bind NADP(+).

The protein belongs to the NAD(P)-dependent epimerase/dehydratase family. SDR39U1 subfamily. In terms of tissue distribution, expressed in adrenal gland.

In terms of biological role, putative NADP-dependent oxidoreductase. This chain is Epimerase family protein SDR39U1 (SDR39U1), found in Homo sapiens (Human).